Consider the following 608-residue polypeptide: NADH-quinone oxidoreductase subunit C/D (608 aa).

The interval 1-199 is NADH dehydrogenase I subunit C; sequence MSAASSLAPQ…EPFHLSTEKE (199 aa). Residues 223–608 form an NADH dehydrogenase I subunit D region; it reads DFMFLNLGPN…IDFVMADVDR (386 aa).

In the N-terminal section; belongs to the complex I 30 kDa subunit family. This sequence in the C-terminal section; belongs to the complex I 49 kDa subunit family. As to quaternary structure, NDH-1 is composed of 13 different subunits. Subunits NuoB, CD, E, F, and G constitute the peripheral sector of the complex.

It localises to the cell inner membrane. The catalysed reaction is a quinone + NADH + 5 H(+)(in) = a quinol + NAD(+) + 4 H(+)(out). Its function is as follows. NDH-1 shuttles electrons from NADH, via FMN and iron-sulfur (Fe-S) centers, to quinones in the respiratory chain. The immediate electron acceptor for the enzyme in this species is believed to be ubiquinone. Couples the redox reaction to proton translocation (for every two electrons transferred, four hydrogen ions are translocated across the cytoplasmic membrane), and thus conserves the redox energy in a proton gradient. This chain is NADH-quinone oxidoreductase subunit C/D, found in Nitrosospira multiformis (strain ATCC 25196 / NCIMB 11849 / C 71).